The chain runs to 50 residues: Photosystem I reaction center subunit IX (50 aa).

A helical transmembrane segment spans residues 7–27; that stretch reads YLSTAPVLAILCCSFLAGLVI.

This sequence belongs to the PsaJ family.

It is found in the plastid. The protein localises to the chloroplast thylakoid membrane. Its function is as follows. May help in the organization of the PsaE and PsaF subunits. This chain is Photosystem I reaction center subunit IX, found in Pinus koraiensis (Korean pine).